Reading from the N-terminus, the 1955-residue chain is 227 kDa spindle- and centromere-associated protein (1955 aa).

Coiled coils occupy residues 82 to 129 (KKRI…NDDV), 152 to 317 (EWAS…ELES), 385 to 1747 (VRNI…LIAL), and 1770 to 1813 (ERIV…ERFI). 2 disordered regions span residues 1865–1896 (PTEQ…SYTY) and 1912–1955 (MTSS…TFSE). Over residues 1878-1896 (RTSSTIKSSEGTTRESYTY) the composition is skewed to polar residues. Over residues 1938-1948 (RKSRPATRKQQ) the composition is skewed to basic residues.

It localises to the cytoplasm. The protein resides in the cytoskeleton. Its subcellular location is the microtubule organizing center. It is found in the centrosome. The protein localises to the chromosome. It localises to the centromere. The protein resides in the kinetochore. Its subcellular location is the spindle. Functionally, may play a role in the organization of the spindle apparatus and its interaction with the centromeres. This chain is 227 kDa spindle- and centromere-associated protein (PUMA1), found in Parascaris univalens (Nematode worm).